A 358-amino-acid chain; its full sequence is Small ribosomal subunit biogenesis GTPase RsgA (358 aa).

The CP-type G domain maps to 76–234 (STEIDRPAVA…LADSPGFNQP (159 aa)). GTP is bound by residues 125–128 (NKID) and 176–184 (GPSGVGKSS). The Zn(2+) site is built by Cys259, Cys264, His266, and Cys272. Residues 319–358 (TYEPKLANKKYRRPSRRGKNQDQERYENKTLQDIYNDDSE) form a disordered region. Over residues 325–336 (ANKKYRRPSRRG) the composition is skewed to basic residues. Basic and acidic residues predominate over residues 337-348 (KNQDQERYENKT).

Belongs to the TRAFAC class YlqF/YawG GTPase family. RsgA subfamily. In terms of assembly, monomer. Associates with 30S ribosomal subunit, binds 16S rRNA. Zn(2+) is required as a cofactor.

It is found in the cytoplasm. One of several proteins that assist in the late maturation steps of the functional core of the 30S ribosomal subunit. Helps release RbfA from mature subunits. May play a role in the assembly of ribosomal proteins into the subunit. Circularly permuted GTPase that catalyzes slow GTP hydrolysis, GTPase activity is stimulated by the 30S ribosomal subunit. This is Small ribosomal subunit biogenesis GTPase RsgA from Microcystis aeruginosa (strain NIES-843 / IAM M-2473).